A 195-amino-acid polypeptide reads, in one-letter code: Fe/S biogenesis protein NfuA (195 aa).

[4Fe-4S] cluster-binding residues include Cys-152 and Cys-155.

The protein belongs to the NfuA family. Homodimer. Requires [4Fe-4S] cluster as cofactor.

Involved in iron-sulfur cluster biogenesis. Binds a 4Fe-4S cluster, can transfer this cluster to apoproteins, and thereby intervenes in the maturation of Fe/S proteins. Could also act as a scaffold/chaperone for damaged Fe/S proteins. This chain is Fe/S biogenesis protein NfuA, found in Vibrio cholerae serotype O1 (strain ATCC 39541 / Classical Ogawa 395 / O395).